Consider the following 73-residue polypeptide: Cx9C motif-containing protein 4, mitochondrial (73 aa).

The region spanning 2 to 44 is the CHCH domain; that stretch reads SNPCQKEACAIQDCLLSHQYDDAKCAKVIDQLYICCSKFYKDN. Short sequence motifs (cx9C motif) lie at residues 5-15 and 26-36; these read CQKEACAIQDC and CAKVIDQLYIC. Cystine bridges form between Cys5/Cys36 and Cys15/Cys26.

This sequence belongs to the CMC4 family.

It localises to the mitochondrion intermembrane space. In Saccharomyces cerevisiae (strain RM11-1a) (Baker's yeast), this protein is Cx9C motif-containing protein 4, mitochondrial (CMC4).